The chain runs to 122 residues: U19-hexatoxin-Hi1a (122 aa).

The first 18 residues, 1–18 (MNTMIGFIVLLVSATVLG), serve as a signal peptide directing secretion. The propeptide occupies 19–80 (DPELDALRKE…YENSNFREKR (62 aa)). Cystine bridges form between C81/C96, C88/C101, and C95/C116.

In terms of tissue distribution, expressed by the venom gland.

Its subcellular location is the secreted. Functionally, probable ion channel inhibitor. The protein is U19-hexatoxin-Hi1a of Hadronyche infensa (Fraser island funnel-web spider).